Reading from the N-terminus, the 319-residue chain is HPr kinase/phosphorylase (319 aa).

Catalysis depends on residues histidine 146 and lysine 167. Residue 161–168 coordinates ATP; sequence GESGLGKS. Residue serine 168 participates in Mg(2+) binding. Catalysis depends on aspartate 185, which acts as the Proton acceptor; for phosphorylation activity. Proton donor; for dephosphorylation activity. Residues 209 to 218 are important for the catalytic mechanism of both phosphorylation and dephosphorylation; the sequence is LEVRGIGLLD. Position 210 (glutamate 210) interacts with Mg(2+). Arginine 252 is a catalytic residue. An important for the catalytic mechanism of dephosphorylation region spans residues 273-278; the sequence is QVVAGR.

The protein belongs to the HPrK/P family. As to quaternary structure, homohexamer. The cofactor is Mg(2+).

It catalyses the reaction [HPr protein]-L-serine + ATP = [HPr protein]-O-phospho-L-serine + ADP + H(+). The enzyme catalyses [HPr protein]-O-phospho-L-serine + phosphate + H(+) = [HPr protein]-L-serine + diphosphate. Catalyzes the ATP- as well as the pyrophosphate-dependent phosphorylation of a specific serine residue in HPr, a phosphocarrier protein of the phosphoenolpyruvate-dependent sugar phosphotransferase system (PTS). HprK/P also catalyzes the pyrophosphate-producing, inorganic phosphate-dependent dephosphorylation (phosphorolysis) of seryl-phosphorylated HPr (P-Ser-HPr). This chain is HPr kinase/phosphorylase, found in Variovorax paradoxus (strain S110).